Consider the following 292-residue polypeptide: F-box protein SKIP28 (292 aa).

The 59-residue stretch at 21–79 (LIVLPYLHSLFELLSMIRVSRSLRDAIRDETALWTKLVIEPPLSSRLTDDILSEFSSKS) folds into the F-box; degenerate domain.

In terms of assembly, part of a SCF (ASK-cullin-F-box) protein ligase complex. Interacts with SKP1A/ASK1 and CUL1.

The protein operates within protein modification; protein ubiquitination. In terms of biological role, component of SCF(ASK-cullin-F-box) E3 ubiquitin ligase complexes, which may mediate the ubiquitination and subsequent proteasomal degradation of target proteins. Required during the endosperm development in embryos. This Arabidopsis thaliana (Mouse-ear cress) protein is F-box protein SKIP28 (SKIP28).